We begin with the raw amino-acid sequence, 109 residues long: Large ribosomal subunit protein eL30 (109 aa).

This sequence belongs to the eukaryotic ribosomal protein eL30 family.

The sequence is that of Large ribosomal subunit protein eL30 (RPL30) from Yarrowia lipolytica (strain CLIB 122 / E 150) (Yeast).